Here is a 455-residue protein sequence, read N- to C-terminus: Probable glycine dehydrogenase (decarboxylating) subunit 1 (455 aa).

Belongs to the GcvP family. N-terminal subunit subfamily. As to quaternary structure, the glycine cleavage system is composed of four proteins: P, T, L and H. In this organism, the P 'protein' is a heterodimer of two subunits.

The enzyme catalyses N(6)-[(R)-lipoyl]-L-lysyl-[glycine-cleavage complex H protein] + glycine + H(+) = N(6)-[(R)-S(8)-aminomethyldihydrolipoyl]-L-lysyl-[glycine-cleavage complex H protein] + CO2. The glycine cleavage system catalyzes the degradation of glycine. The P protein binds the alpha-amino group of glycine through its pyridoxal phosphate cofactor; CO(2) is released and the remaining methylamine moiety is then transferred to the lipoamide cofactor of the H protein. This Saccharolobus islandicus (strain Y.N.15.51 / Yellowstone #2) (Sulfolobus islandicus) protein is Probable glycine dehydrogenase (decarboxylating) subunit 1.